A 372-amino-acid chain; its full sequence is Beta-1,4-galactosyltransferase 2 (372 aa).

The Cytoplasmic portion of the chain corresponds to 1–15 (MSRLLGGTLERVCKA). The helical; Signal-anchor for type II membrane protein transmembrane segment at 16–36 (VLLLCLLHFLVAVILYFDVYA) threads the bilayer. Over 37–372 (QHLAFFSRFS…GRPPSWPPRG (336 aa)) the chain is Lumenal. The disordered stretch occupies residues 56 to 97 (PAASSSSSSSNCSRPNATASSSGLPEVPSALPGPTAPTLPPC). N-linked (GlcNAc...) asparagine glycosylation is found at Asn-66 and Asn-71. A compositionally biased stretch (polar residues) spans 66–78 (NCSRPNATASSSG). Cysteines 97 and 139 form a disulfide. Residues 150-154 (PFRHR), 189-191 (FNR), 217-218 (VD), and Trp-278 each bind UDP-alpha-D-galactose. Residues Cys-211 and Cys-230 are joined by a disulfide bond. Asp-218 contacts Mn(2+). 280–283 (GEDD) provides a ligand contact to N-acetyl-D-glucosamine. His-311 is a Mn(2+) binding site. 311-313 (HDR) is a UDP-alpha-D-galactose binding site. An N-acetyl-D-glucosamine-binding site is contributed by Arg-323. Asn-357 is a glycosylation site (N-linked (GlcNAc...) asparagine).

Belongs to the glycosyltransferase 7 family. Requires Mn(2+) as cofactor. As to expression, weakly expressed in various tissues. Highest expression in prostate, testis, ovary, intestine, muscle, and in fetal brain.

The protein localises to the golgi apparatus. The protein resides in the golgi stack membrane. The catalysed reaction is D-glucose + UDP-alpha-D-galactose = lactose + UDP + H(+). It carries out the reaction an N-acetyl-beta-D-glucosaminyl derivative + UDP-alpha-D-galactose = a beta-D-galactosyl-(1-&gt;4)-N-acetyl-beta-D-glucosaminyl derivative + UDP + H(+). It catalyses the reaction N-acetyl-D-glucosamine + UDP-alpha-D-galactose = beta-D-galactosyl-(1-&gt;4)-N-acetyl-D-glucosamine + UDP + H(+). It participates in protein modification; protein glycosylation. Functionally, responsible for the synthesis of complex-type N-linked oligosaccharides in many glycoproteins as well as the carbohydrate moieties of glycolipids. Can produce lactose. The sequence is that of Beta-1,4-galactosyltransferase 2 from Homo sapiens (Human).